Here is a 330-residue protein sequence, read N- to C-terminus: 5'-AMP-activated protein kinase subunit gamma-1 (330 aa).

Polar residues predominate over residues 1–13 (METVTSSDSSSAV). The disordered stretch occupies residues 1–26 (METVTSSDSSSAVENEHPQDTPESNN). CBS domains follow at residues 43–103 (PTSS…KSAL), 125–187 (SFKP…PKPE), and 198–260 (IGTY…NLDV). ADP contacts are provided by residues Arg-70, 85-90 (MLTITD), Val-130, 151-152 (HR), and Lys-170. AMP contacts are provided by residues Arg-70, 85–90 (MLTITD), Val-130, His-151, 151–152 (HR), Lys-170, Thr-200, Ala-205, 226–227 (SA), and 242–245 (SKFD). ATP-binding positions include Arg-70, 85–90 (MLTITD), Val-130, 151–152 (HR), Arg-152, and Lys-170. The short motif at 138–159 (LFDAVSSLIRNKIHRLPVIDPE) is the AMPK pseudosubstrate element. Position 242 to 245 (242 to 245 (SKFD)) interacts with ADP. 242–245 (SKFD) contributes to the ATP binding site. Ser-261 is modified (phosphoserine; by ULK1). Thr-263 is modified (phosphothreonine; by ULK1). Arg-269 lines the ADP pocket. Residue Arg-269 coordinates AMP. Arg-269 lines the ATP pocket. Ser-270 is modified (phosphoserine; by ULK1). The CBS 4 domain maps to 272–329 (YFEGVLKCYLHETLETIINRLVEAEVHRLVVVDENDVVKGIVSLSDILQALVLTGGEK). Residues Leu-277 and 298 to 299 (HR) contribute to the ADP site. AMP contacts are provided by residues Leu-277, His-298, 298-299 (HR), and 314-317 (SLSD). Residues Leu-277 and 298–299 (HR) each bind ATP.

Belongs to the 5'-AMP-activated protein kinase gamma subunit family. AMPK is a heterotrimer of an alpha catalytic subunit (PRKAA1 or PRKAA2), a beta (PRKAB1 or PRKAB2) and a gamma non-catalytic subunits (PRKAG1, PRKAG2 or PRKAG3). Interacts with FNIP1 and FNIP2. Post-translationally, phosphorylated by ULK1 and ULK2; leading to negatively regulate AMPK activity and suggesting the existence of a regulatory feedback loop between ULK1, ULK2 and AMPK. Glycosylated; O-GlcNAcylated by OGT, promoting the AMP-activated protein kinase (AMPK) activity.

AMP/ATP-binding subunit of AMP-activated protein kinase (AMPK), an energy sensor protein kinase that plays a key role in regulating cellular energy metabolism. In response to reduction of intracellular ATP levels, AMPK activates energy-producing pathways and inhibits energy-consuming processes: inhibits protein, carbohydrate and lipid biosynthesis, as well as cell growth and proliferation. AMPK acts via direct phosphorylation of metabolic enzymes, and by longer-term effects via phosphorylation of transcription regulators. Also acts as a regulator of cellular polarity by remodeling the actin cytoskeleton; probably by indirectly activating myosin. Gamma non-catalytic subunit mediates binding to AMP, ADP and ATP, leading to activate or inhibit AMPK: AMP-binding results in allosteric activation of alpha catalytic subunit (PRKAA1 or PRKAA2) both by inducing phosphorylation and preventing dephosphorylation of catalytic subunits. ADP also stimulates phosphorylation, without stimulating already phosphorylated catalytic subunit. ATP promotes dephosphorylation of catalytic subunit, rendering the AMPK enzyme inactive. In Sus scrofa (Pig), this protein is 5'-AMP-activated protein kinase subunit gamma-1 (PRKAG1).